The sequence spans 285 residues: MANLRIIKRRIRSVRNIAKITRAMEMIAASKMKKAQERGLAGRPYSEKITEVIAALAALPQSGEILHPLLERRPVKKIAILHITPDRGQCGGLVANINRKTGTFIMEQKVPVSAVVVGRKGVDFIRRIRQQMRAEFINLGDKPDYLDTLPISRVIMDDFMSGEIDQVFIAYTQFVSTAIQNPVLEQLLPVMPVELPPGQNLEYIYEPESATVLNSLLPRFVEMSVYHAILESIASEQSARMVAMRNATDNAKELIGELTLVYNKARQESITNELLDIVGGAAALA.

The protein belongs to the ATPase gamma chain family. As to quaternary structure, F-type ATPases have 2 components, CF(1) - the catalytic core - and CF(0) - the membrane proton channel. CF(1) has five subunits: alpha(3), beta(3), gamma(1), delta(1), epsilon(1). CF(0) has three main subunits: a, b and c.

The protein localises to the cell membrane. Its function is as follows. Produces ATP from ADP in the presence of a proton gradient across the membrane. The gamma chain is believed to be important in regulating ATPase activity and the flow of protons through the CF(0) complex. The chain is ATP synthase gamma chain from Dehalococcoides mccartyi (strain CBDB1).